Here is a 119-residue protein sequence, read N- to C-terminus: Holo-[acyl-carrier-protein] synthase (119 aa).

Mg(2+)-binding residues include D5 and E51.

It belongs to the P-Pant transferase superfamily. AcpS family. Mg(2+) is required as a cofactor.

The protein localises to the cytoplasm. The enzyme catalyses apo-[ACP] + CoA = holo-[ACP] + adenosine 3',5'-bisphosphate + H(+). Functionally, transfers the 4'-phosphopantetheine moiety from coenzyme A to a Ser of acyl-carrier-protein. The chain is Holo-[acyl-carrier-protein] synthase from Helicobacter pylori (strain G27).